Consider the following 245-residue polypeptide: MTNLLPEMAEIWQQTLNWQPTDSQQARFQQLYELILEGNRQLNLTRITEPQEFWEKHLWDSLRGVAPQQQLISFLPVGASVIDIGTGAGFPGVPVAIIAPNSTMTLVDSTRKKIAFIESILKELGLTNAKTLVSRAEEIGQQPQHREQYDVALIRAVGTASACAEYTLPLLKLGGLAVIYRGTWTEEETTSLENAVRQLGGTVELIDNFTTPLTNSVRHCLYLRKVAKTPANFPRAVGVPTQKPI.

Residues Gly-85, Phe-90, 108-110 (DST), 136-137 (AE), and Arg-155 each bind S-adenosyl-L-methionine.

It belongs to the methyltransferase superfamily. RNA methyltransferase RsmG family.

It localises to the cytoplasm. In terms of biological role, specifically methylates the N7 position of a guanine in 16S rRNA. This Trichormus variabilis (strain ATCC 29413 / PCC 7937) (Anabaena variabilis) protein is Ribosomal RNA small subunit methyltransferase G.